Reading from the N-terminus, the 98-residue chain is Large ribosomal subunit protein uL23 (98 aa).

It belongs to the universal ribosomal protein uL23 family. Part of the 50S ribosomal subunit. Contacts protein L29, and trigger factor when it is bound to the ribosome.

Its function is as follows. One of the early assembly proteins it binds 23S rRNA. One of the proteins that surrounds the polypeptide exit tunnel on the outside of the ribosome. Forms the main docking site for trigger factor binding to the ribosome. This Streptococcus pneumoniae serotype 19F (strain G54) protein is Large ribosomal subunit protein uL23.